A 439-amino-acid polypeptide reads, in one-letter code: Cysteine--tRNA ligase (439 aa).

A Zn(2+)-binding site is contributed by Cys-28. The 'HIGH' region motif lies at 30–40; the sequence is ITVYDLCHIGH. Residues Cys-209, His-234, and Glu-238 each coordinate Zn(2+). The short motif at 266–270 is the 'KMSKS' region element; it reads KMSKS. Position 269 (Lys-269) interacts with ATP.

The protein belongs to the class-I aminoacyl-tRNA synthetase family. Monomer. Zn(2+) is required as a cofactor.

Its subcellular location is the cytoplasm. The catalysed reaction is tRNA(Cys) + L-cysteine + ATP = L-cysteinyl-tRNA(Cys) + AMP + diphosphate. The protein is Cysteine--tRNA ligase of Shigella boydii serotype 4 (strain Sb227).